A 190-amino-acid chain; its full sequence is Guanylate kinase (190 aa).

The Guanylate kinase-like domain maps to 3 to 185 (NYIFIVSAPS…SLEQFCKYFE (183 aa)). An ATP-binding site is contributed by 10-17 (APSGAGKS).

The protein belongs to the guanylate kinase family.

The protein localises to the cytoplasm. It carries out the reaction GMP + ATP = GDP + ADP. Essential for recycling GMP and indirectly, cGMP. This Francisella tularensis subsp. tularensis (strain FSC 198) protein is Guanylate kinase.